Reading from the N-terminus, the 84-residue chain is U8-theraphotoxin-Hhn1c 3 (84 aa).

A signal peptide spans Met1–Cys21. Intrachain disulfides connect Cys23-Cys35, Cys29-Cys44, Cys34-Cys67, Cys54-Cys75, and Cys69-Cys81.

This sequence belongs to the AVIT (prokineticin) family. Expressed by the venom gland.

It is found in the secreted. The protein is U8-theraphotoxin-Hhn1c 3 of Cyriopagopus hainanus (Chinese bird spider).